The chain runs to 222 residues: Interleukin-12 subunit alpha (222 aa).

The signal sequence occupies residues 1–25 (MCPPRGLLLVTILVLLSHLDHLTWA). 3 cysteine pairs are disulfide-bonded: cysteine 40–cysteine 113, cysteine 67–cysteine 199, and cysteine 88–cysteine 126. Residues asparagine 42, asparagine 96, and asparagine 110 are each glycosylated (N-linked (GlcNAc...) asparagine).

It belongs to the IL-6 superfamily. Heterodimer with IL12B; disulfide-linked. This heterodimer is known as interleukin IL-12. Heterodimer with EBI3/IL27B; not disulfide-linked. This heterodimer is known as interleukin IL-35. Interacts with NBR1; this interaction promotes IL-12 secretion.

The protein localises to the secreted. Heterodimerizes with IL12B to form the IL-12 cytokine or with EBI3/IL27B to form the IL-35 cytokine. IL-12 is primarily produced by professional antigen-presenting cells (APCs) such as B-cells and dendritic cells (DCs) as well as macrophages and granulocytes and regulates T-cell and natural killer-cell responses, induces the production of interferon-gamma (IFN-gamma), favors the differentiation of T-helper 1 (Th1) cells and is an important link between innate resistance and adaptive immunity. Mechanistically, exerts its biological effects through a receptor composed of IL12R1 and IL12R2 subunits. Binding to the receptor results in the rapid tyrosine phosphorylation of a number of cellular substrates including the JAK family kinases TYK2 and JAK2. In turn, recruited STAT4 gets phosphorylated and translocates to the nucleus where it regulates cytokine/growth factor responsive genes. As part of IL-35, plays essential roles in maintaining the immune homeostasis of the liver microenvironment and also functions as an immune-suppressive cytokine. Mediates biological events through unconventional receptors composed of IL12RB2 and gp130/IL6ST heterodimers or homodimers. Signaling requires the transcription factors STAT1 and STAT4, which form a unique heterodimer that binds to distinct DNA sites. This Canis lupus familiaris (Dog) protein is Interleukin-12 subunit alpha (IL12A).